Consider the following 326-residue polypeptide: Mitochondrial glycine transporter (326 aa).

Solcar repeat units follow at residues H45 to Y134, P141 to T225, and L237 to K321. 6 helical membrane-spanning segments follow: residues F51–Q76, G109–F135, V147–E172, G200–R223, V241–M267, and G296–V314.

Belongs to the mitochondrial carrier (TC 2.A.29) family. SLC25A38 subfamily.

The protein localises to the mitochondrion inner membrane. It carries out the reaction glycine(in) = glycine(out). Functionally, mitochondrial glycine transporter that imports glycine into the mitochondrial matrix. Plays an important role in providing glycine for the first enzymatic step in heme biosynthesis, the condensation of glycine with succinyl-CoA to produce 5-aminolevulinate (ALA) in the mitochondrial matrix. Required during erythropoiesis. In terms of biological role, plays a role as pro-apoptotic protein that induces caspase-dependent apoptosis. The sequence is that of Mitochondrial glycine transporter from Rattus norvegicus (Rat).